The primary structure comprises 192 residues: Ion-translocating oxidoreductase complex subunit B (192 aa).

The hydrophobic stretch occupies residues 1-26 (MNAIWIAVAAVSLLGLAFGAILGYAS). Positions 32 to 91 (EDDPVVEKIDEILPQSQCGQCGYPGCRPYAEAISCNGEKINRCAPGGEAVMLKIAELLNV) constitute a 4Fe-4S domain. [4Fe-4S] cluster-binding residues include C49, C52, C57, C74, C117, C120, C123, C127, C147, C150, C153, and C157. 2 consecutive 4Fe-4S ferredoxin-type domains span residues 108-137 (MVAV…GATR) and 138-167 (AMHT…LQPV).

Belongs to the 4Fe4S bacterial-type ferredoxin family. RnfB subfamily. As to quaternary structure, the complex is composed of six subunits: RsxA, RsxB, RsxC, RsxD, RsxE and RsxG. The cofactor is [4Fe-4S] cluster.

Its subcellular location is the cell inner membrane. Functionally, part of a membrane-bound complex that couples electron transfer with translocation of ions across the membrane. Required to maintain the reduced state of SoxR. In Escherichia coli O8 (strain IAI1), this protein is Ion-translocating oxidoreductase complex subunit B.